A 407-amino-acid polypeptide reads, in one-letter code: Protein FAM53B (407 aa).

2 disordered regions span residues 204–286 (SSSM…RPSL) and 306–380 (ITGE…DTEP). Composition is skewed to basic and acidic residues over residues 264–281 (LNEK…DTHK) and 327–339 (DAVD…HNLK). The Nuclear localization signal signature appears at 272-275 (KRRR). Residues 357–369 (ITEEVDWNCDDGT) are compositionally biased toward acidic residues.

This sequence belongs to the FAM53 family. As to quaternary structure, interacts with ctnnb1. As to expression, predominantly expressed in proliferating cells throughout embryonic development.

Its subcellular location is the nucleus. Functionally, acts as a regulator of Wnt signaling pathway by regulating beta-catenin (ctnnb1) nuclear localization. In Oryzias latipes (Japanese rice fish), this protein is Protein FAM53B.